We begin with the raw amino-acid sequence, 322 residues long: 8-oxo-(d)GTP phosphatase (322 aa).

The tract at residues 1–21 (MMPVDDLQEIPLSKDTTEKSK) is disordered. Positions 22–156 (HTVRAAGAVL…DDRKVLRRFV (135 aa)) constitute a Nudix hydrolase domain. Substrate is bound by residues 55–58 (RPRY), D60, and 65–67 (KGK). 3 residues coordinate Mg(2+): K65, E81, and E85. The Nudix box signature appears at 66–87 (GKLDQGETEPVAAAREIHEETG). Substrate-binding residues include Y101, K108, E127, and Y145. Mg(2+) is bound at residue E127.

This sequence belongs to the Nudix hydrolase family. As to quaternary structure, forms head-to-tail homodimers. Mg(2+) is required as a cofactor.

It carries out the reaction 8-oxo-dGTP + H2O = 8-oxo-dGDP + phosphate + H(+). The catalysed reaction is 8-oxo-GTP + H2O = 8-oxo-GDP + phosphate + H(+). The enzyme catalyses 8-oxo-dGDP + H2O = 8-oxo-dGMP + phosphate + H(+). It catalyses the reaction 8-oxo-GDP + H2O = 8-oxo-GMP + phosphate + H(+). It carries out the reaction P(1),P(6)-bis(5'-adenosyl) hexaphosphate + H2O = 2 ATP + 2 H(+). The catalysed reaction is P(1),P(5)-bis(5'-adenosyl) pentaphosphate + H2O = ADP + ATP + 2 H(+). The enzyme catalyses P(1),P(4)-bis(5'-adenosyl) tetraphosphate + H2O = AMP + ATP + 2 H(+). With respect to regulation, ap4A hydrolysis is inhibited by fluoride ions. Functionally, catalyzes the conversion of 8-oxo-dGTP to 8-oxo-dGDP, and 8-oxo-GTP to 8-oxo-GDP. At high enzyme concentrations, can also catalyze the conversion of 8-oxo-dGDP to 8-oxo-dGMP, and 8-oxo-GDP to 8-oxo-GMP. In addition, catalyzes the hydrolysis of the diadenosine polyphosphates diadenosine hexaphosphate (Ap6A), diadenosine pentaphosphate (Ap5A) and diadenosine tetraphosphate (Ap4A). In Mycolicibacterium smegmatis (strain ATCC 700084 / mc(2)155) (Mycobacterium smegmatis), this protein is 8-oxo-(d)GTP phosphatase.